Consider the following 55-residue polypeptide: Large ribosomal subunit protein bL33 (55 aa).

It belongs to the bacterial ribosomal protein bL33 family.

This is Large ribosomal subunit protein bL33 from Blochmanniella pennsylvanica (strain BPEN).